We begin with the raw amino-acid sequence, 1461 residues long: Periaxin (1461 aa).

Phosphoserine is present on S7. Residues 16-99 (LVEIIVETEA…YKVSFCLKRT (84 aa)) enclose the PDZ domain. Positions 70 to 84 (VFFENFKYEDALRLL) match the Nuclear export signal motif. Residues 118 to 196 (KGPRAKVAKL…RLQLPRLRVR (79 aa)) carry the Nuclear localization signal motif. S133 carries the phosphoserine modification. Repeat copies occupy residues 431–435 (GPEVK), 439–443 (GPEVK), 447–451 (APEVK), 455–459 (VPEAA), 463–467 (VRLPE), 468–472 (VELPK), 473–477 (VSEMK), 481–485 (VPEMA), 486–490 (VPEVR), 494–498 (VELPK), 499–503 (VSEMK), 507–511 (VPEMA), 512–516 (VPEVR), 520–524 (VQLLK), 525–529 (VSEMK), 533–537 (VPEMA), 538–542 (VPEVR), 546–550 (VQLPK), 551–555 (VSEMK), 559–563 (VSEVA), 564–568 (VPEVR), 572–576 (VQLPK), 577–581 (VPEMK), 582–586 (VPEMK), 590–594 (VPEMK), 595–599 (LPEMK), 600–604 (LPEVQ), 608–612 (VPEMA), 613–617 (VPDVH), 618–622 (LPEVQ), 626–630 (VPEMK), 631–635 (LPEMK), 636–640 (LPEVK), 644–648 (VPEMA), 649–653 (VPDVH), 654–658 (LPEVQ), 662–666 (VPEMK), 670–674 (MPEMA), 675–679 (VPEVR), 683–687 (VQLPK), 688–692 (VSEMK), 696–700 (VPEMA), 701–705 (VPDVH), 706–710 (LPEVQ), 714–718 (VCEMK), 719–723 (VPDMK), 724–728 (LPEIK), 732–736 (VPEMA), 737–741 (VPDVH), 742–746 (LPEVQ), 750–754 (VSEIR), 755–759 (LPEMQ), 760–764 (VPKVP), 771–775 (APEVK), and 779–783 (APEVQ). Residues 431–783 (GPEVKVPKGP…VKLPRAPEVQ (353 aa)) form a 55 X 5 AA approximate tandem repeats of [LVMAG]-[PSREQC]-[EDKL]-[LIVMAP]-[AQKHRPE]; that may have a tripeptide spacer of [LV]-P-[KER] region. Phosphoserine is present on residues S900 and S1082. Over residues 1318–1327 (EGAEEGEKAK) the composition is skewed to basic and acidic residues. The segment at 1318-1461 (EGAEEGEKAK…RMEGAQAAAV (144 aa)) is disordered. Phosphoserine occurs at positions 1349, 1351, 1363, 1401, 1407, and 1439. Residues 1352–1363 (PEEEEEEEEEGS) show a composition bias toward acidic residues.

It belongs to the periaxin family. In terms of assembly, homodimer (via PDZ domain). Interacts with SCN10A. Found in a complex with SCN10A. Interacts with DRP2. Identified in a dystroglycan complex that contains at least PRX, DRP2, UTRN, DMD and DAG1. Detected in a complex composed of at least EZR, AHNAK, PPL and PRX. Identified in a complex with EZR, AHNAK, BFSP1, BFSP2, ANK2, PLEC, VIM and spectrin. Detected in spinal cord. Isoform 1 and isoform 2 are found in sciatic nerve and Schwann cells.

The protein resides in the cell membrane. Its subcellular location is the nucleus. The protein localises to the cytoplasm. It is found in the cell junction. Scaffolding protein that functions as part of a dystroglycan complex in Schwann cells, and as part of EZR and AHNAK-containing complexes in eye lens fiber cells. Required for the maintenance of the peripheral myelin sheath that is essential for normal transmission of nerve impulses and normal perception of sensory stimuli. Required for normal transport of MBP mRNA from the perinuclear to the paranodal regions. Required for normal remyelination after nerve injury. Required for normal elongation of Schwann cells and normal length of the internodes between the nodes of Ranvier. The demyelinated nodes of Ranvier permit saltatory transmission of nerve impulses; shorter internodes cause slower transmission of nerve impulses. Required for the formation of appositions between the abaxonal surface of the myelin sheath and the Schwann cell plasma membrane; the Schwann cell cytoplasm is restricted to regions between these appositions. Required for the formation of Cajal bands and of Schmidt-Lanterman incisures that correspond to short, cytoplasm-filled regions on myelinated nerves. Recruits DRP2 to the Schwann cell plasma membrane. Required for normal protein composition of the eye lens fiber cell plasma membrane and normal eye lens fiber cell morphology. The protein is Periaxin (PRX) of Homo sapiens (Human).